A 138-amino-acid chain; its full sequence is Large ribosomal subunit protein uL16 (138 aa).

Residues 1-19 (MLIPKRVKYRRQHRPHRSG) show a composition bias toward basic residues. Residues 1-24 (MLIPKRVKYRRQHRPHRSGVSKGG) are disordered.

The protein belongs to the universal ribosomal protein uL16 family. In terms of assembly, part of the 50S ribosomal subunit.

Its function is as follows. Binds 23S rRNA and is also seen to make contacts with the A and possibly P site tRNAs. The protein is Large ribosomal subunit protein uL16 of Corynebacterium diphtheriae (strain ATCC 700971 / NCTC 13129 / Biotype gravis).